The chain runs to 418 residues: tRNA(Met) cytidine acetate ligase (418 aa).

Residues glycine 95, asparagine 161, and arginine 186 each contribute to the ATP site.

It belongs to the TmcAL family.

It localises to the cytoplasm. The catalysed reaction is cytidine(34) in elongator tRNA(Met) + acetate + ATP = N(4)-acetylcytidine(34) in elongator tRNA(Met) + AMP + diphosphate. Its function is as follows. Catalyzes the formation of N(4)-acetylcytidine (ac(4)C) at the wobble position of elongator tRNA(Met), using acetate and ATP as substrates. First activates an acetate ion to form acetyladenylate (Ac-AMP) and then transfers the acetyl group to tRNA to form ac(4)C34. The chain is tRNA(Met) cytidine acetate ligase from Thermotoga maritima (strain ATCC 43589 / DSM 3109 / JCM 10099 / NBRC 100826 / MSB8).